Reading from the N-terminus, the 420-residue chain is Carbohydrate sulfotransferase 1 (420 aa).

Residue methionine 1 is a topological domain, cytoplasmic. The chain crosses the membrane as a helical; Signal-anchor for type II membrane protein span at residues 2 to 23 (QCSWKAVILLALVSIAIQYTAI). Residues 24-420 (RTFTAKPFHI…IEDKTFIPFL (397 aa)) lie on the Lumenal side of the membrane. Residue asparagine 64 is glycosylated (N-linked (GlcNAc...) asparagine). 77-83 (TRSGSSF) is a 3'-phosphoadenylyl sulfate binding site. Asparagine 153 and asparagine 197 each carry an N-linked (GlcNAc...) asparagine glycan. 242–250 (RDPRGILSS) provides a ligand contact to 3'-phosphoadenylyl sulfate. N-linked (GlcNAc...) asparagine glycosylation is found at asparagine 342 and asparagine 405.

The protein belongs to the sulfotransferase 1 family. Gal/GlcNAc/GalNAc subfamily.

Its subcellular location is the golgi apparatus membrane. It carries out the reaction 3'-phosphoadenylyl sulfate + keratan = adenosine 3',5'-bisphosphate + keratan 6'-sulfate.. Sulfotransferase that utilizes 3'-phospho-5'-adenylyl sulfate (PAPS) as sulfonate donor to catalyze the transfer of sulfate to position 6 of galactose (Gal) residues of keratan. This is Carbohydrate sulfotransferase 1 (chst1) from Danio rerio (Zebrafish).